Reading from the N-terminus, the 305-residue chain is tRNA uridine(34) hydroxylase (305 aa).

One can recognise a Rhodanese domain in the interval 130–228 (DDPDTLVIDT…YLGEIPEQES (99 aa)). The active-site Cysteine persulfide intermediate is cysteine 188.

This sequence belongs to the TrhO family.

The enzyme catalyses uridine(34) in tRNA + AH2 + O2 = 5-hydroxyuridine(34) in tRNA + A + H2O. In terms of biological role, catalyzes oxygen-dependent 5-hydroxyuridine (ho5U) modification at position 34 in tRNAs. The protein is tRNA uridine(34) hydroxylase of Synechococcus sp. (strain CC9902).